A 62-amino-acid chain; its full sequence is MSIILQILVVALIVYSFVLIVAVPITLSTASGWSKSKSSIVTASIGWVGMVLLTGVLNSFVS.

The next 2 membrane-spanning stretches (helical) occupy residues 8–28 (LVVA…ITLS) and 41–61 (VTAS…NSFV).

The protein belongs to the PsbZ family. As to quaternary structure, PSII is composed of 1 copy each of membrane proteins PsbA, PsbB, PsbC, PsbD, PsbE, PsbF, PsbH, PsbI, PsbJ, PsbK, PsbL, PsbM, PsbT, PsbX, PsbY, PsbZ, Psb30/Ycf12, at least 3 peripheral proteins of the oxygen-evolving complex and a large number of cofactors. It forms dimeric complexes.

It localises to the plastid. It is found in the chloroplast thylakoid membrane. Functionally, may control the interaction of photosystem II (PSII) cores with the light-harvesting antenna, regulates electron flow through the 2 photosystem reaction centers. PSII is a light-driven water plastoquinone oxidoreductase, using light energy to abstract electrons from H(2)O, generating a proton gradient subsequently used for ATP formation. The polypeptide is Photosystem II reaction center protein Z (Cyanidioschyzon merolae (strain NIES-3377 / 10D) (Unicellular red alga)).